Reading from the N-terminus, the 141-residue chain is Large ribosomal subunit protein uL11 (141 aa).

The protein belongs to the universal ribosomal protein uL11 family. Part of the ribosomal stalk of the 50S ribosomal subunit. Interacts with L10 and the large rRNA to form the base of the stalk. L10 forms an elongated spine to which L12 dimers bind in a sequential fashion forming a multimeric L10(L12)X complex. In terms of processing, one or more lysine residues are methylated.

Functionally, forms part of the ribosomal stalk which helps the ribosome interact with GTP-bound translation factors. In Streptococcus gordonii (strain Challis / ATCC 35105 / BCRC 15272 / CH1 / DL1 / V288), this protein is Large ribosomal subunit protein uL11.